The sequence spans 785 residues: Cadherin-7 (785 aa).

The N-terminal stretch at 1–27 (MKLGKVELCHFLQLIALFLCFSGMSQA) is a signal peptide. A propeptide spanning residues 28-47 (ELPRSRSKPYFQSGRSRTKR) is cleaved from the precursor. Topologically, residues 28–607 (ELPRSRSKPY…AYVLPAGLST (580 aa)) are extracellular. 5 Cadherin domains span residues 49-153 (WVWN…EPKF), 154-262 (LDGP…PPRF), 263-377 (PRRS…PPVF), 378-482 (SSPL…APEF), and 482-599 (FAMD…AEAY). N-linked (GlcNAc...) asparagine glycosylation is found at N449 and N530. Residues 608–628 (GALIAILACVLTLLVLILLIV) traverse the membrane as a helical segment. Topologically, residues 629-785 (TMRRRKKEPL…YGNGQESLYS (157 aa)) are cytoplasmic.

It is found in the cell membrane. Functionally, cadherins are calcium-dependent cell adhesion proteins. They preferentially interact with themselves in a homophilic manner in connecting cells; cadherins may thus contribute to the sorting of heterogeneous cell types. The sequence is that of Cadherin-7 (Cdh7) from Mus musculus (Mouse).